The sequence spans 639 residues: Chaperone protein DnaK (639 aa).

At Thr-198 the chain carries Phosphothreonine; by autocatalysis. The span at 603–618 (AKAQTQGGAQEGAAKQ) shows a compositional bias: low complexity. A disordered region spans residues 603–639 (AKAQTQGGAQEGAAKQSNATADDVVDAEFEEVKDDKK). Residues 625–639 (DVVDAEFEEVKDDKK) are compositionally biased toward acidic residues.

It belongs to the heat shock protein 70 family.

Its function is as follows. Acts as a chaperone. This is Chaperone protein DnaK from Shewanella sp. (strain ANA-3).